The following is a 99-amino-acid chain: High mobility group nucleosome-binding domain-containing protein 3 (99 aa).

Basic and acidic residues-rich tracts occupy residues 1–25 (MPKRKSPENTEGKDGSKVTKQEPTR), 39–53 (PEPKPRKTSAKKEPG), and 62–72 (GKKEEKQEAGK). A disordered region spans residues 1 to 99 (MPKRKSPENT…KTESVDNEGE (99 aa)). S6 is subject to Phosphoserine. T10 carries the post-translational modification Phosphothreonine. Residues S78 and S93 each carry the phosphoserine modification. Residues 81–93 (GETKAEEAQKTES) are compositionally biased toward basic and acidic residues.

This sequence belongs to the HMGN family. Interacts with the ligand binding domain of the thyroid receptor (TR) (in vitro). Requires the presence of thyroid hormone for its interaction. Interacts with transcriptional regulator SEHBP. Interacts with nucleosomes. As to expression, expressed in kidney, lung, pancreas, testis, skeletal muscle, heart, thyroid gland, pituitary gland, prostate and uterus. Low expression in liver, spleen, placenta and ovaries.

Its subcellular location is the nucleus. Binds to nucleosomes, regulating chromatin structure and consequently, chromatin-dependent processes such as transcription, DNA replication and DNA repair. Affects both insulin and glucagon levels and modulates the expression of pancreatic genes involved in insulin secretion. Regulates the expression of the glucose transporter SLC2A2 by binding specifically to its promoter region and recruiting PDX1 and additional transcription factors. Regulates the expression of SLC6A9, a glycine transporter which regulates the glycine concentration in synaptic junctions in the central nervous system, by binding to its transcription start site. May play a role in ocular development and astrocyte function. This chain is High mobility group nucleosome-binding domain-containing protein 3 (HMGN3), found in Homo sapiens (Human).